The chain runs to 417 residues: Queuine tRNA-ribosyltransferase accessory subunit 2 (417 aa).

Positions 324, 326, 329, and 355 each coordinate Zn(2+).

The protein belongs to the queuine tRNA-ribosyltransferase family. QTRT2 subfamily. In terms of assembly, heterodimer of a catalytic subunit and an accessory subunit. Requires Zn(2+) as cofactor.

Its subcellular location is the cytoplasm. Non-catalytic subunit of the queuine tRNA-ribosyltransferase (TGT) that catalyzes the base-exchange of a guanine (G) residue with queuine (Q) at position 34 (anticodon wobble position) in tRNAs with GU(N) anticodons (tRNA-Asp, -Asn, -His and -Tyr), resulting in the hypermodified nucleoside queuosine (7-(((4,5-cis-dihydroxy-2-cyclopenten-1-yl)amino)methyl)-7-deazaguanosine). This Drosophila pseudoobscura pseudoobscura (Fruit fly) protein is Queuine tRNA-ribosyltransferase accessory subunit 2.